The primary structure comprises 239 residues: Ribonuclease HII (239 aa).

The region spanning 18–231 (KIIVGLDEAG…SKNLLKEIEE (214 aa)) is the RNase H type-2 domain. Positions 24, 25, and 125 each coordinate a divalent metal cation.

This sequence belongs to the RNase HII family. The cofactor is Mn(2+). Mg(2+) serves as cofactor.

The protein resides in the cytoplasm. The catalysed reaction is Endonucleolytic cleavage to 5'-phosphomonoester.. Endonuclease that specifically degrades the RNA of RNA-DNA hybrids. The protein is Ribonuclease HII of Methanococcus maripaludis (strain C6 / ATCC BAA-1332).